Reading from the N-terminus, the 328-residue chain is 6-phosphogluconolactonase (328 aa).

The protein belongs to the cycloisomerase 2 family.

It catalyses the reaction 6-phospho-D-glucono-1,5-lactone + H2O = 6-phospho-D-gluconate + H(+). It functions in the pathway carbohydrate degradation; pentose phosphate pathway; D-ribulose 5-phosphate from D-glucose 6-phosphate (oxidative stage): step 2/3. In terms of biological role, catalyzes the hydrolysis of 6-phosphogluconolactone to 6-phosphogluconate. The chain is 6-phosphogluconolactonase from Xenorhabdus nematophila (strain ATCC 19061 / DSM 3370 / CCUG 14189 / LMG 1036 / NCIMB 9965 / AN6).